The sequence spans 301 residues: Ribonuclease HIII (301 aa).

Residues 90-301 (TPHIGIDESG…LDAILGKVGK (212 aa)) form the RNase H type-2 domain. A divalent metal cation contacts are provided by D96, E97, and D198.

This sequence belongs to the RNase HII family. RnhC subfamily. Mn(2+) serves as cofactor. Mg(2+) is required as a cofactor.

It is found in the cytoplasm. It catalyses the reaction Endonucleolytic cleavage to 5'-phosphomonoester.. Its function is as follows. Endonuclease that specifically degrades the RNA of RNA-DNA hybrids. This is Ribonuclease HIII from Protochlamydia amoebophila (strain UWE25).